We begin with the raw amino-acid sequence, 237 residues long: MKPETFYNLLAEQNLPLSNQQKEQFERYFELLVEWNEKINLTAITDKEEVYLKHFYDSIAPILQGLIPNETIKLLDIGAGAGFPSLPMKILYPELDVTIIDSLNKRINFLQLLAQELDLNGVHFYHGRAEDFAQDKNFRAQYDFVTARAVARMQVLSELTIPYLKVGGKLLALKASNAPEELLEAKNALNLLFSKVEDNLSYALPNRDPRYITVVEKKKETPNKYPRKAGMPNKRPL.

Residues glycine 78, phenylalanine 83, 129–130 (AE), and arginine 148 each bind S-adenosyl-L-methionine. The interval 218–237 (KKETPNKYPRKAGMPNKRPL) is disordered.

This sequence belongs to the methyltransferase superfamily. RNA methyltransferase RsmG family.

The protein localises to the cytoplasm. Functionally, specifically methylates the N7 position of a guanine in 16S rRNA. The protein is Ribosomal RNA small subunit methyltransferase G of Streptococcus pneumoniae (strain ATCC BAA-255 / R6).